Consider the following 77-residue polypeptide: Large ribosomal subunit protein bL28 (77 aa).

This sequence belongs to the bacterial ribosomal protein bL28 family.

The polypeptide is Large ribosomal subunit protein bL28 (Ralstonia nicotianae (strain ATCC BAA-1114 / GMI1000) (Ralstonia solanacearum)).